A 678-amino-acid polypeptide reads, in one-letter code: Catalase (678 aa).

The segment covering 1–26 (MSNEREMQNKKDQQLESFRVEDEGKK) has biased composition (basic and acidic residues). The tract at residues 1–32 (MSNEREMQNKKDQQLESFRVEDEGKKLTTNQG) is disordered. Active-site residues include His75 and Asn148. A heme-binding site is contributed by Tyr362.

The protein belongs to the catalase family. HPII subfamily. Heme serves as cofactor.

Its subcellular location is the cytoplasm. The catalysed reaction is 2 H2O2 = O2 + 2 H2O. Its function is as follows. Decomposes hydrogen peroxide into water and oxygen; serves to protect cells from the toxic effects of hydrogen peroxide. The sequence is that of Catalase (katE) from Alkalihalophilus pseudofirmus (strain ATCC BAA-2126 / JCM 17055 / OF4) (Bacillus pseudofirmus).